The chain runs to 235 residues: Orotidine 5'-phosphate decarboxylase (235 aa).

Residues D12, K34, 61–70 (DLKFHDIPNT), T121, R182, Q191, G211, and R212 each bind substrate. Catalysis depends on K63, which acts as the Proton donor.

The protein belongs to the OMP decarboxylase family. Type 1 subfamily. In terms of assembly, homodimer.

The catalysed reaction is orotidine 5'-phosphate + H(+) = UMP + CO2. Its pathway is pyrimidine metabolism; UMP biosynthesis via de novo pathway; UMP from orotate: step 2/2. In terms of biological role, catalyzes the decarboxylation of orotidine 5'-monophosphate (OMP) to uridine 5'-monophosphate (UMP). This is Orotidine 5'-phosphate decarboxylase from Marinomonas sp. (strain MWYL1).